A 491-amino-acid chain; its full sequence is Glutathione synthetase GSH2 (491 aa).

Residue arginine 128 participates in substrate binding. Glutamate 146 provides a ligand contact to ATP. 2 residues coordinate Mg(2+): glutamate 146 and asparagine 148. Substrate is bound by residues 150-153 (VSVS), 228-230 (ERN), glutamine 234, and 285-288 (RTGY). Residues lysine 324, 382-391 (KPQREGGGNN), tyrosine 393, 415-418 (MELI), and glutamate 442 contribute to the ATP site. Glutamate 386 is a Mg(2+) binding site. Residue arginine 467 participates in substrate binding. ATP is bound by residues lysine 469 and glutamate 475. 478–479 (VA) is a binding site for substrate.

This sequence belongs to the eukaryotic GSH synthase family. In terms of assembly, homodimer. It depends on Mg(2+) as a cofactor.

It carries out the reaction gamma-L-glutamyl-L-cysteine + glycine + ATP = glutathione + ADP + phosphate + H(+). It participates in sulfur metabolism; glutathione biosynthesis; glutathione from L-cysteine and L-glutamate: step 2/2. This Saccharomyces cerevisiae (strain ATCC 204508 / S288c) (Baker's yeast) protein is Glutathione synthetase GSH2 (GSH2).